We begin with the raw amino-acid sequence, 821 residues long: Leucine--tRNA ligase (821 aa).

The 'HIGH' region signature appears at 44-54; the sequence is PYPSGRIHMGH. Residues 589–593 carry the 'KMSKS' region motif; that stretch reads KMSKS. Lysine 592 is a binding site for ATP.

Belongs to the class-I aminoacyl-tRNA synthetase family.

The protein localises to the cytoplasm. The catalysed reaction is tRNA(Leu) + L-leucine + ATP = L-leucyl-tRNA(Leu) + AMP + diphosphate. In Campylobacter curvus (strain 525.92), this protein is Leucine--tRNA ligase.